The sequence spans 356 residues: tRNA-specific 2-thiouridylase MnmA (356 aa).

ATP is bound by residues Ala-6–Ser-13 and Leu-32. The active-site Nucleophile is Cys-101. Residues Cys-101 and Cys-193 are joined by a disulfide bond. Gly-125 serves as a coordination point for ATP. The tract at residues Lys-143 to Gln-145 is interaction with tRNA. Cys-193 functions as the Cysteine persulfide intermediate in the catalytic mechanism.

The protein belongs to the MnmA/TRMU family.

Its subcellular location is the cytoplasm. The enzyme catalyses S-sulfanyl-L-cysteinyl-[protein] + uridine(34) in tRNA + AH2 + ATP = 2-thiouridine(34) in tRNA + L-cysteinyl-[protein] + A + AMP + diphosphate + H(+). Functionally, catalyzes the 2-thiolation of uridine at the wobble position (U34) of tRNA, leading to the formation of s(2)U34. The protein is tRNA-specific 2-thiouridylase MnmA of Mycobacteroides abscessus (strain ATCC 19977 / DSM 44196 / CCUG 20993 / CIP 104536 / JCM 13569 / NCTC 13031 / TMC 1543 / L948) (Mycobacterium abscessus).